A 237-amino-acid chain; its full sequence is Phosphoserine phosphatase (237 aa).

D39 (nucleophile) is an active-site residue. Mg(2+) contacts are provided by D39 and E41. E41 acts as the Proton donor in catalysis. Substrate-binding positions include E47, R78, 122–123 (SD), and K165. Position 184 (D184) interacts with Mg(2+). N187 is a binding site for substrate.

The protein belongs to the thrH family. Mg(2+) serves as cofactor.

It catalyses the reaction O-phospho-L-serine + H2O = L-serine + phosphate. The enzyme catalyses O-phospho-D-serine + H2O = D-serine + phosphate. It participates in amino-acid biosynthesis; L-serine biosynthesis; L-serine from 3-phospho-D-glycerate: step 3/3. Phosphoserine phosphatase that mediates dephosphorylation of phosphoserine in the serine biosynthesis pathway. Also able to dephosphorylate phospho-threonine. In Pseudomonas syringae pv. tomato (strain ATCC BAA-871 / DC3000), this protein is Phosphoserine phosphatase.